Consider the following 367-residue polypeptide: Glutamate 5-kinase (367 aa).

Residue Lys-10 participates in ATP binding. Positions 50, 137, and 149 each coordinate substrate. ATP-binding positions include 169 to 170 (TD) and 211 to 217 (TGGMSTK). A PUA domain is found at 275–353 (AGIITIDAGA…QDIEQVLGYE (79 aa)).

It belongs to the glutamate 5-kinase family.

Its subcellular location is the cytoplasm. It catalyses the reaction L-glutamate + ATP = L-glutamyl 5-phosphate + ADP. Its pathway is amino-acid biosynthesis; L-proline biosynthesis; L-glutamate 5-semialdehyde from L-glutamate: step 1/2. Functionally, catalyzes the transfer of a phosphate group to glutamate to form L-glutamate 5-phosphate. This is Glutamate 5-kinase from Pasteurella multocida (strain Pm70).